Consider the following 466-residue polypeptide: Soluble pyridine nucleotide transhydrogenase (466 aa).

Residue E36–C45 participates in FAD binding.

It belongs to the class-I pyridine nucleotide-disulfide oxidoreductase family. FAD serves as cofactor.

The protein localises to the cytoplasm. The catalysed reaction is NAD(+) + NADPH = NADH + NADP(+). Conversion of NADPH, generated by peripheral catabolic pathways, to NADH, which can enter the respiratory chain for energy generation. This is Soluble pyridine nucleotide transhydrogenase from Yersinia pseudotuberculosis serotype O:1b (strain IP 31758).